Here is a 304-residue protein sequence, read N- to C-terminus: Cell surface-binding protein OPG105 (304 aa).

The 235-residue stretch at 1 to 235 folds into the Alpha-carbonic anhydrase domain; sequence MPQQLSPINI…NDDTQVYYSG (235 aa). Topologically, residues 1-275 are virion surface; it reads MPQQLSPINI…YQKYIEENKT (275 aa). A helical transmembrane segment spans residues 276 to 294; sequence FAIIAIVFVFILTAILFFM. At 295-304 the chain is on the intravirion side; that stretch reads SRRYSREKQN.

The protein belongs to the alpha-carbonic anhydrase family. As to quaternary structure, homodimer; disulfide-linked. Apparently non-glycosylated.

It is found in the virion membrane. Its function is as follows. Binds to chondroitin sulfate on the cell surface to provide virion attachment to target cell. In Bos taurus (Bovine), this protein is Cell surface-binding protein OPG105 (OPG105).